Here is a 428-residue protein sequence, read N- to C-terminus: tRNA modification GTPase MnmE (428 aa).

(6S)-5-formyl-5,6,7,8-tetrahydrofolate-binding residues include Arg-20, Glu-76, and Arg-116. The TrmE-type G domain maps to 212–351 (GFEVAIVGAP…LVAAIGERLL (140 aa)). Asn-222 is a K(+) binding site. Residues 222–227 (NAGKST), 241–247 (SEIAGTT), and 266–269 (DTAG) contribute to the GTP site. Ser-226 lines the Mg(2+) pocket. 3 residues coordinate K(+): Ser-241, Ile-243, and Thr-246. Thr-247 is a Mg(2+) binding site. Lys-428 contributes to the (6S)-5-formyl-5,6,7,8-tetrahydrofolate binding site.

This sequence belongs to the TRAFAC class TrmE-Era-EngA-EngB-Septin-like GTPase superfamily. TrmE GTPase family. As to quaternary structure, homodimer. Heterotetramer of two MnmE and two MnmG subunits. K(+) serves as cofactor.

It localises to the cytoplasm. Functionally, exhibits a very high intrinsic GTPase hydrolysis rate. Involved in the addition of a carboxymethylaminomethyl (cmnm) group at the wobble position (U34) of certain tRNAs, forming tRNA-cmnm(5)s(2)U34. This is tRNA modification GTPase MnmE from Cereibacter sphaeroides (strain ATCC 17029 / ATH 2.4.9) (Rhodobacter sphaeroides).